Here is a 362-residue protein sequence, read N- to C-terminus: Fe-S cluster assembly protein DRE2 (362 aa).

Residues 1–28 form a disordered region; that stretch reads MAPGLDLTPDFHPPTTTTTTTNNAPPQQ. Residues 15–28 show a composition bias toward low complexity; the sequence is TTTTTTTNNAPPQQ. Residues 24–165 form an N-terminal SAM-like domain region; the sequence is APPQQRTLLL…KPEYAEEEAV (142 aa). Positions 166–254 are linker; the sequence is PLRFGKKKAA…EETLLTEEDL (89 aa). Residues Cys264, Cys275, Cys278, and Cys280 each contribute to the [2Fe-2S] cluster site. The fe-S binding site A stretch occupies residues 264 to 280; the sequence is CQPQPGKKRRACKDCTC. Residues Cys325, Cys328, Cys336, and Cys339 each contribute to the [4Fe-4S] cluster site. 2 consecutive short sequence motifs (cx2C motif) follow at residues 325–328 and 336–339; these read CGSC and CSDC. The fe-S binding site B stretch occupies residues 325–339; that stretch reads CGSCYLGDAFRCSDC.

Belongs to the anamorsin family. Monomer. Interacts with TAH18. Interacts with MIA40. [2Fe-2S] cluster is required as a cofactor. Requires [4Fe-4S] cluster as cofactor.

It localises to the cytoplasm. The protein localises to the mitochondrion intermembrane space. Component of the cytosolic iron-sulfur (Fe-S) protein assembly (CIA) machinery required for the maturation of extramitochondrial Fe-S proteins. Part of an electron transfer chain functioning in an early step of cytosolic Fe-S biogenesis, facilitating the de novo assembly of a [4Fe-4S] cluster on the scaffold complex CFD1-NBP35. Electrons are transferred to DRE2 from NADPH via the FAD- and FMN-containing protein TAH18. TAH18-DRE2 are also required for the assembly of the diferric tyrosyl radical cofactor of ribonucleotide reductase (RNR), probably by providing electrons for reduction during radical cofactor maturation in the catalytic small subunit RNR2. This is Fe-S cluster assembly protein DRE2 from Chaetomium globosum (strain ATCC 6205 / CBS 148.51 / DSM 1962 / NBRC 6347 / NRRL 1970) (Soil fungus).